The following is a 241-amino-acid chain: Pyridoxine 5'-phosphate synthase (241 aa).

3-amino-2-oxopropyl phosphate is bound at residue asparagine 7. 1-deoxy-D-xylulose 5-phosphate is bound at residue 9 to 10 (DH). Arginine 18 contributes to the 3-amino-2-oxopropyl phosphate binding site. Histidine 43 functions as the Proton acceptor in the catalytic mechanism. The 1-deoxy-D-xylulose 5-phosphate site is built by arginine 45 and histidine 50. Glutamate 70 (proton acceptor) is an active-site residue. Position 100 (threonine 100) interacts with 1-deoxy-D-xylulose 5-phosphate. Histidine 191 acts as the Proton donor in catalysis. 3-amino-2-oxopropyl phosphate is bound by residues glycine 192 and 213–214 (GH).

It belongs to the PNP synthase family. As to quaternary structure, homooctamer; tetramer of dimers.

It localises to the cytoplasm. The catalysed reaction is 3-amino-2-oxopropyl phosphate + 1-deoxy-D-xylulose 5-phosphate = pyridoxine 5'-phosphate + phosphate + 2 H2O + H(+). The protein operates within cofactor biosynthesis; pyridoxine 5'-phosphate biosynthesis; pyridoxine 5'-phosphate from D-erythrose 4-phosphate: step 5/5. Functionally, catalyzes the complicated ring closure reaction between the two acyclic compounds 1-deoxy-D-xylulose-5-phosphate (DXP) and 3-amino-2-oxopropyl phosphate (1-amino-acetone-3-phosphate or AAP) to form pyridoxine 5'-phosphate (PNP) and inorganic phosphate. This chain is Pyridoxine 5'-phosphate synthase, found in Nitratidesulfovibrio vulgaris (strain ATCC 29579 / DSM 644 / CCUG 34227 / NCIMB 8303 / VKM B-1760 / Hildenborough) (Desulfovibrio vulgaris).